Consider the following 139-residue polypeptide: Asp-hemolysin (139 aa).

Residues 1 to 5 (MASVQ) constitute a propeptide that is removed on maturation. Residues 47 to 79 (TSEDVQQKTAPPGGSVNVNSCGRSDASSGTTGG) form a disordered region. Over residues 62 to 75 (VNVNSCGRSDASSG) the composition is skewed to polar residues.

Belongs to the aegerolysin family.

The protein is Asp-hemolysin of Aspergillus fumigatus (strain ATCC MYA-4609 / CBS 101355 / FGSC A1100 / Af293) (Neosartorya fumigata).